Here is an 88-residue protein sequence, read N- to C-terminus: Small ribosomal subunit protein bS20 (88 aa).

The protein belongs to the bacterial ribosomal protein bS20 family.

In terms of biological role, binds directly to 16S ribosomal RNA. The polypeptide is Small ribosomal subunit protein bS20 (Clostridioides difficile (strain 630) (Peptoclostridium difficile)).